The following is a 214-amino-acid chain: Outer-membrane lipoprotein LolB (214 aa).

The signal sequence occupies residues methionine 1 to glycine 25. The N-palmitoyl cysteine moiety is linked to residue cysteine 26. Cysteine 26 carries S-diacylglycerol cysteine lipidation.

It belongs to the LolB family. Monomer.

It localises to the cell outer membrane. Functionally, plays a critical role in the incorporation of lipoproteins in the outer membrane after they are released by the LolA protein. The chain is Outer-membrane lipoprotein LolB from Shewanella sp. (strain MR-7).